Consider the following 241-residue polypeptide: uncharacterized protein (241 aa).

Belongs to the AB hydrolase superfamily. AB hydrolase 2 family.

This is an uncharacterized protein from Schizosaccharomyces pombe (strain 972 / ATCC 24843) (Fission yeast).